The primary structure comprises 69 residues: Cytochrome c oxidase subunit 8A, mitochondrial (69 aa).

Residues M1–Q25 constitute a mitochondrion transit peptide. The SIFI-degron signature appears at Y2 to L19. At V26–G36 the chain is on the mitochondrial matrix side. Residues V37 to S60 traverse the membrane as a helical segment. The Mitochondrial intermembrane segment spans residues H61–G69.

The protein belongs to the cytochrome c oxidase VIII family. In terms of assembly, component of the cytochrome c oxidase (complex IV, CIV), a multisubunit enzyme composed of 14 subunits. The complex is composed of a catalytic core of 3 subunits MT-CO1, MT-CO2 and MT-CO3, encoded in the mitochondrial DNA, and 11 supernumerary subunits COX4I, COX5A, COX5B, COX6A, COX6B, COX6C, COX7A, COX7B, COX7C, COX8 and NDUFA4, which are encoded in the nuclear genome. The complex exists as a monomer or a dimer and forms supercomplexes (SCs) in the inner mitochondrial membrane with NADH-ubiquinone oxidoreductase (complex I, CI) and ubiquinol-cytochrome c oxidoreductase (cytochrome b-c1 complex, complex III, CIII), resulting in different assemblies (supercomplex SCI(1)III(2)IV(1) and megacomplex MCI(2)III(2)IV(2)). Post-translationally, in response to mitochondrial stress, the precursor protein is ubiquitinated by the SIFI complex in the cytoplasm before mitochondrial import, leading to its degradation. Within the SIFI complex, UBR4 initiates ubiquitin chain that are further elongated or branched by KCMF1.

It is found in the mitochondrion inner membrane. It functions in the pathway energy metabolism; oxidative phosphorylation. Its function is as follows. Component of the cytochrome c oxidase, the last enzyme in the mitochondrial electron transport chain which drives oxidative phosphorylation. The respiratory chain contains 3 multisubunit complexes succinate dehydrogenase (complex II, CII), ubiquinol-cytochrome c oxidoreductase (cytochrome b-c1 complex, complex III, CIII) and cytochrome c oxidase (complex IV, CIV), that cooperate to transfer electrons derived from NADH and succinate to molecular oxygen, creating an electrochemical gradient over the inner membrane that drives transmembrane transport and the ATP synthase. Cytochrome c oxidase is the component of the respiratory chain that catalyzes the reduction of oxygen to water. Electrons originating from reduced cytochrome c in the intermembrane space (IMS) are transferred via the dinuclear copper A center (CU(A)) of subunit 2 and heme A of subunit 1 to the active site in subunit 1, a binuclear center (BNC) formed by heme A3 and copper B (CU(B)). The BNC reduces molecular oxygen to 2 water molecules using 4 electrons from cytochrome c in the IMS and 4 protons from the mitochondrial matrix. The chain is Cytochrome c oxidase subunit 8A, mitochondrial (COX8A) from Ateles belzebuth (White-bellied spider monkey).